A 969-amino-acid polypeptide reads, in one-letter code: Isoleucine--tRNA ligase (969 aa).

Positions 70–80 (PYANGAIHIGH) match the 'HIGH' region motif. Residue glutamate 601 participates in L-isoleucyl-5'-AMP binding. The 'KMSKS' region signature appears at 642-646 (KMSKS). Position 645 (lysine 645) interacts with ATP.

It belongs to the class-I aminoacyl-tRNA synthetase family. IleS type 1 subfamily. As to quaternary structure, monomer.

The protein localises to the cytoplasm. The enzyme catalyses tRNA(Ile) + L-isoleucine + ATP = L-isoleucyl-tRNA(Ile) + AMP + diphosphate. Its function is as follows. Catalyzes the attachment of isoleucine to tRNA(Ile). As IleRS can inadvertently accommodate and process structurally similar amino acids such as valine, to avoid such errors it has two additional distinct tRNA(Ile)-dependent editing activities. One activity is designated as 'pretransfer' editing and involves the hydrolysis of activated Val-AMP. The other activity is designated 'posttransfer' editing and involves deacylation of mischarged Val-tRNA(Ile). The sequence is that of Isoleucine--tRNA ligase from Caulobacter vibrioides (strain ATCC 19089 / CIP 103742 / CB 15) (Caulobacter crescentus).